The following is a 319-amino-acid chain: Acetyl-coenzyme A carboxylase carboxyl transferase subunit alpha (319 aa).

The CoA carboxyltransferase C-terminal domain maps to 32-293 (NIQEEISRLQ…HTALAEALQT (262 aa)).

This sequence belongs to the AccA family. In terms of assembly, acetyl-CoA carboxylase is a heterohexamer composed of biotin carboxyl carrier protein (AccB), biotin carboxylase (AccC) and two subunits each of ACCase subunit alpha (AccA) and ACCase subunit beta (AccD).

The protein localises to the cytoplasm. The enzyme catalyses N(6)-carboxybiotinyl-L-lysyl-[protein] + acetyl-CoA = N(6)-biotinyl-L-lysyl-[protein] + malonyl-CoA. It participates in lipid metabolism; malonyl-CoA biosynthesis; malonyl-CoA from acetyl-CoA: step 1/1. Component of the acetyl coenzyme A carboxylase (ACC) complex. First, biotin carboxylase catalyzes the carboxylation of biotin on its carrier protein (BCCP) and then the CO(2) group is transferred by the carboxyltransferase to acetyl-CoA to form malonyl-CoA. This is Acetyl-coenzyme A carboxylase carboxyl transferase subunit alpha from Thioalkalivibrio sulfidiphilus (strain HL-EbGR7).